Consider the following 156-residue polypeptide: MPRKGHIAKRDVLPDPLYNSKVVTKLINNIMEDGKKGVAQKICYNAFEYLKEKTGKEPMEVFEAAMNNVMPLLEVKARRIGGATYQVPIEVRPERRQTLGIRWMLAAADKRGEKYMHLKLAGELLDASNNTGAAVKKREDTHKMAEANKAFAHYRY.

Belongs to the universal ribosomal protein uS7 family. Part of the 30S ribosomal subunit. Contacts proteins S9 and S11.

One of the primary rRNA binding proteins, it binds directly to 16S rRNA where it nucleates assembly of the head domain of the 30S subunit. Is located at the subunit interface close to the decoding center, probably blocks exit of the E-site tRNA. The polypeptide is Small ribosomal subunit protein uS7 (Clostridium acetobutylicum (strain ATCC 824 / DSM 792 / JCM 1419 / IAM 19013 / LMG 5710 / NBRC 13948 / NRRL B-527 / VKM B-1787 / 2291 / W)).